The chain runs to 776 residues: Heat shock protein 110 (776 aa).

Residues 741–776 are disordered; it reads ILNKKKPAAPAPPKKEEPQPAAGDQPQSQPGEMDVD.

The protein belongs to the heat shock protein 70 family.

The sequence is that of Heat shock protein 110 from Caenorhabditis elegans.